We begin with the raw amino-acid sequence, 248 residues long: MARKFFVGGNFKMNGTRKDLKAIVDNLNNAQLDPNAEVVIAPPALYLDFVKQNLQKPNVEVAAQNVFNKPNGAFTGEISATQLLDLGVKWVILGHSERRNELGESDEFIASKTKYALDNGISVIWCCGESKDTRQAGETIKFVENQLAALAKEINDWKNVVIAYEPIWAIGTGLVATKEQAQEVHAAIRSWLKQNVSDKVAEETRILYGGSVNAKNCKDLAKEQDIDGFLVGGASLKPEFVDIINANL.

Positions 10 and 12 each coordinate substrate. His95 (electrophile) is an active-site residue. Catalysis depends on Glu165, which acts as the Proton acceptor.

Belongs to the triosephosphate isomerase family. As to quaternary structure, homodimer.

It catalyses the reaction D-glyceraldehyde 3-phosphate = dihydroxyacetone phosphate. It functions in the pathway carbohydrate biosynthesis; gluconeogenesis. Its pathway is carbohydrate degradation; glycolysis; D-glyceraldehyde 3-phosphate from glycerone phosphate: step 1/1. This is Triosephosphate isomerase (tpi-1) from Neurospora crassa (strain ATCC 24698 / 74-OR23-1A / CBS 708.71 / DSM 1257 / FGSC 987).